Reading from the N-terminus, the 179-residue chain is Large ribosomal subunit protein uL5 (179 aa).

This sequence belongs to the universal ribosomal protein uL5 family. As to quaternary structure, part of the 50S ribosomal subunit; part of the 5S rRNA/L5/L18/L25 subcomplex. Contacts the 5S rRNA and the P site tRNA. Forms a bridge to the 30S subunit in the 70S ribosome.

This is one of the proteins that bind and probably mediate the attachment of the 5S RNA into the large ribosomal subunit, where it forms part of the central protuberance. In the 70S ribosome it contacts protein S13 of the 30S subunit (bridge B1b), connecting the 2 subunits; this bridge is implicated in subunit movement. Contacts the P site tRNA; the 5S rRNA and some of its associated proteins might help stabilize positioning of ribosome-bound tRNAs. This Francisella tularensis subsp. novicida (strain U112) protein is Large ribosomal subunit protein uL5.